Here is a 246-residue protein sequence, read N- to C-terminus: tRNA (guanine-N(7)-)-methyltransferase (246 aa).

Residues Glu77, Glu102, Asp129, and Asp152 each coordinate S-adenosyl-L-methionine. Residue Asp152 is part of the active site. Substrate contacts are provided by residues Lys156, Asp188, and 225–228 (TKFE).

It belongs to the class I-like SAM-binding methyltransferase superfamily. TrmB family.

It carries out the reaction guanosine(46) in tRNA + S-adenosyl-L-methionine = N(7)-methylguanosine(46) in tRNA + S-adenosyl-L-homocysteine. Its pathway is tRNA modification; N(7)-methylguanine-tRNA biosynthesis. Catalyzes the formation of N(7)-methylguanine at position 46 (m7G46) in tRNA. This Haemophilus influenzae (strain 86-028NP) protein is tRNA (guanine-N(7)-)-methyltransferase.